A 360-amino-acid chain; its full sequence is MIVKSLELSNFRNYENLSLEFSPSTNILYGDNAQGKTNILEAVFLCATTKSHKGSKDREIIKLQSEEAHIRMRINRDDVDHRLDMHLKKNKPKGVAIDGIPIKRSSELFGIINVVFFSPEDLSIIKNGPSERRRFIDMELCQLSKLYLHNLINYNKVLNQRNNLLKQIGFNKSLLDTLYVWDQQLIHFGSALIKERDAFMKSMNELIIALHKKLSDGKEELEIVYEASVAESEFENKLKKSMERDIALKVTNVGPHRDDLSFLINGQDVRKYGSQGQQRTAALSLKLAEIELVKQVTKDKPILLLDDVLSELDRKRQNQLLDSIVGIQTIVTCTGLEEFVNNRIETDRIYKVIQGTVEKG.

30–37 is a binding site for ATP; that stretch reads GDNAQGKT.

This sequence belongs to the RecF family.

The protein localises to the cytoplasm. The RecF protein is involved in DNA metabolism; it is required for DNA replication and normal SOS inducibility. RecF binds preferentially to single-stranded, linear DNA. It also seems to bind ATP. The protein is DNA replication and repair protein RecF of Lachnoclostridium phytofermentans (strain ATCC 700394 / DSM 18823 / ISDg) (Clostridium phytofermentans).